We begin with the raw amino-acid sequence, 179 residues long: Transmembrane protein 196 (179 aa).

The next 4 helical transmembrane spans lie at 11 to 31 (LLVL…VGAV), 44 to 61 (LGDS…ILCA), 67 to 87 (LVMI…ILNF), and 100 to 120 (LYPL…GCTL).

It is found in the cytoplasm. The protein resides in the membrane. Acts as a tumor suppressor in lung cancer. Inhibits tumor cell growth by inhibiting cell proliferation and migration and promoting cell apoptosis. Inhibits metastasis of lung cancer by suppressing beta-catenin expression in the Wnt/beta-catenin signaling pathway. In Pongo abelii (Sumatran orangutan), this protein is Transmembrane protein 196 (TMEM196).